We begin with the raw amino-acid sequence, 266 residues long: MGQKIHPTGFRLAVSRNWASRWYANNNNFAAMLQEDIGVREYLKKKLKNASVGRVIIERPAKNARITIFSSRPGVVIGKKGEDIELLKTELQRRMGVPVHVNIEEIRKPETDAQLIADSITQQLERRIMFRRAMKRAMQNAMRLGAQGIKIMSAGRLNGIEIARTEWYREGRVPLHTLRADIDYATSEAKTTYGVIGVKVWVYKGDTLGRNDAPVVEEVTEDKRPRRNARPGDRRPRRDGEGGAPGARRGGPRRGAGKPEDGKTGE.

One can recognise a KH type-2 domain in the interval 39–107 (VREYLKKKLK…PVHVNIEEIR (69 aa)). The tract at residues 214–266 (PVVEEVTEDKRPRRNARPGDRRPRRDGEGGAPGARRGGPRRGAGKPEDGKTGE) is disordered. Basic and acidic residues-rich tracts occupy residues 230 to 241 (RPGDRRPRRDGE) and 257 to 266 (GKPEDGKTGE).

The protein belongs to the universal ribosomal protein uS3 family. As to quaternary structure, part of the 30S ribosomal subunit. Forms a tight complex with proteins S10 and S14.

Functionally, binds the lower part of the 30S subunit head. Binds mRNA in the 70S ribosome, positioning it for translation. The sequence is that of Small ribosomal subunit protein uS3 from Burkholderia thailandensis (strain ATCC 700388 / DSM 13276 / CCUG 48851 / CIP 106301 / E264).